We begin with the raw amino-acid sequence, 178 residues long: Germinal center-associated signaling and motility protein (178 aa).

Position 99 is a phosphoserine (serine 99). A Phosphotyrosine modification is found at tyrosine 148.

Interacts with ACTB and MYH2; the interaction with MYH2 is increased by IL6-induced phosphorylation. Interacts (via C-terminus) with ARHGEF11 (via DH domain). Interacts with ARHGEF12. Interacts with SYK; the interaction increases after B-cell receptor stimulation, resulting in enhanced SYK autophosphorylation and activity. Post-translationally, phosphorylation on tyrosine residues can be induced by IL6. Phosphorylation is mediated by LYN. Targeted by the ubiquitin E3 ligase subunit FBXO10 to mediate its ubiquitination and degradation. Expressed in diffuse large B-cell lymphoma (DLBCL) and several germinal center (GC)-like lymphoma cell lines (at protein level). Highly expressed in normal GC lymphocytes and GC-derived malignancies. Expressed in thymus and spleen.

The protein resides in the cytoplasm. The protein localises to the cell membrane. In terms of biological role, involved in the negative regulation of lymphocyte motility. It mediates the migration-inhibitory effects of IL6. Serves as a positive regulator of the RhoA signaling pathway. Enhancement of RhoA activation results in inhibition of lymphocyte and lymphoma cell motility by activation of its downstream effector ROCK. Is a regulator of B-cell receptor signaling, that acts through SYK kinase activation. The chain is Germinal center-associated signaling and motility protein (GCSAM) from Homo sapiens (Human).